Reading from the N-terminus, the 1142-residue chain is MKEPLLGGECDKAVASQLGLLDEIKTEPDNAQEYCHRQQSRTQENELKINAVFSESASQLTAGIQLSLASSGVNKMLPSVSTTAIQVSCAGCKKILQKGQTAYQRKGSAQLFCSIPCITEYISSASSPVPSKRTCSNCSKDILNPKDVISVQLEDTTSCKTFCSLSCLSSYEEKRKPFVTICTNSILTKCSMCQKTAIIQYEVKYQNVKHNLCSNACLSKFHSANNFIMNCCENCGTYCYTSSSLSHILQMEGQSHYFNSSKSITAYKQKPAKPLISVPCKPLKPSDEMIETTSDLGKTELFCSINCFSAYSKAKMESSSVSVVSVVHDTSTELLSPKKDTTPVISNIVSLADTDVALPIMNTDVLQDTVSSVTATADVIVDLSKSSPSEPSNAVASSSTEQPSVSPSSSVFSQHAIGSSTEVQKDNMKSMKISDELCHPKCTSKVQKVKGKSRSIKKSCCADFECLENSKKDVAFCYSCQLFCQKYFSCGRESFATHGTSNWKKTLEKFRKHEKSEMHLKSLEFWREYQFCDGAVSDDLSIHSKQIEGNKKYLKLIIENILFLGKQCLPLRGNDQSVSSVNKGNFLELLEMRAKDKGEETFRLMNSQVDFYNSTQIQSDIIEIIKTEMLQDIVNEINDSSAFSIICDETINSAMKEQLSICVRYPQKSSKAILIKERFLGFVDTEEMTGTHLHRTIKTYLQQIGVDMDKIHGQAYDSTTNLKIKFNKIAAEFKKEEPRALYIHCYAHFLDLSIIRFCKEVKELRSALKTLSSLFNTICMSGEMLANFRNIYRLSQNKTCKKHISQSCWTVHDRTLLSVIDSLPEIIETLEVIASHSSNTSFADELSHLLTLVSKFEFVFCLKFLYRVLSVTGILSKELQNKTIDIFSLSSKIEAILECLSSERNDVYFKTIWDGTEEICQKITCKGFKVEKPSLQKRRKIQKSVDLGNSDNMFFPTSTEEQYKINIYYQGLDTILQNLKLCFSEFDYCKIKQISELLFKWNEPLNETTAKHVQEFYKLDEDIIPELRFYRHYAKLNFVIDDSCINFVSLGCLFIQHGLHSNIPCLSKLLYIALSWPITSASTENSFSTLPRLKTYLCNTMGQEKLTGPALMAVEQELVNKLMEPERLNEIVEKFISQMKEI.

Residue K25 forms a Glycyl lysine isopeptide (Lys-Gly) (interchain with G-Cter in SUMO2) linkage. 3 consecutive MYM-type zinc fingers follow at residues 110–148 (QLFCSIPCITEYISSASSPVPSKRTCSNCSKDILNPKDV), 160–203 (KTFC…QYEV), and 210–245 (HNLCSNACLSKFHSANNFIMNCCENCGTYCYTSSSL). K284 is covalently cross-linked (Glycyl lysine isopeptide (Lys-Gly) (interchain with G-Cter in SUMO2)). Residues 300-331 (ELFCSINCFSAYSKAKMESSSVSVVSVVHDTS) form an MYM-type 4 zinc finger. Over residues 385–396 (KSSPSEPSNAVA) the composition is skewed to polar residues. The interval 385-413 (KSSPSEPSNAVASSSTEQPSVSPSSSVFS) is disordered. Positions 397 to 413 (SSSTEQPSVSPSSSVFS) are enriched in low complexity. A TTF-type zinc finger spans residues 452–538 (KSRSIKKSCC…YQFCDGAVSD (87 aa)).

The protein localises to the nucleus. This Homo sapiens (Human) protein is Zinc finger MYM-type protein 1 (ZMYM1).